A 792-amino-acid chain; its full sequence is MKFSENWLRNHAPIQANRDVLVATLTAIGLEVENVAVLGEALDLILVARIVNVVPHPESDLLQICQVDVAQDTLLQIVCGASNVRPGLVVPLALLGAKIGALTIKSTTLRGIESNGMLCSAKELGLDTEASGLMELPEDAPIGTPLADYLALPDASIEIKLTPNRADCFSVRGIAFDVAAACASEVTPFHIDEIPAVSARTLPVELHAGANAPRYCGCVIEGIDPAAPTPVWMAERLRRSGIRPVSLLVDITQYVMLELGQPMHAFDVDTLRGPIGVRLSRNDEALKLLDGRTVVLDNDFLVVTDADQPIALAGLIGGWETRITDTTINVFLEAAHFAPAAIMGRGRKLGLHTDASHRFERGVDPALPPQAIAFATRLILELAGGKPGSLIHVQLPEYLPAPASILLRRTRIARLLGIVIDDAEVERILQALGMQVTTQAEGWRVVAPSRRFDIAIEEDLIEELVRIRGYEHLPTALPVGASHIAMPSETRLDMTSVRRQLIARELQETINYAFIDAELLRRWQLNTGQVMLMNPLSAELAVMRPRLLPGLVAALGRNIARQLERVRLFELGNVFTASDEAGAAPLETRHVAAAVCGDAFALQWGEQVRKVDFYDLKGDLESLAAASGAVLTFHSSAQPWGHPGRSADVWCDDMCIGWIGQLHPALTQTLEINVDVIAFELALEPLVRRALPRAHALSRFPFVRRDLACVVPEHVTWSELAITVRDVIGPLLRDVKLFDRYVGKGIEPGFKSLAIGLILQDDTRTLIDRDVDDIMTKVVMAIQQRHDVRIRS.

The tRNA-binding domain maps to 39–147 (GEALDLILVA…EDAPIGTPLA (109 aa)). The 76-residue stretch at 400 to 475 (PAPASILLRR…RIRGYEHLPT (76 aa)) folds into the B5 domain. 4 residues coordinate Mg(2+): aspartate 453, aspartate 459, glutamate 462, and glutamate 463. The FDX-ACB domain occupies 698 to 791 (SRFPFVRRDL…IQQRHDVRIR (94 aa)).

It belongs to the phenylalanyl-tRNA synthetase beta subunit family. Type 1 subfamily. In terms of assembly, tetramer of two alpha and two beta subunits. It depends on Mg(2+) as a cofactor.

The protein resides in the cytoplasm. It carries out the reaction tRNA(Phe) + L-phenylalanine + ATP = L-phenylalanyl-tRNA(Phe) + AMP + diphosphate + H(+). This chain is Phenylalanine--tRNA ligase beta subunit, found in Xylella fastidiosa (strain Temecula1 / ATCC 700964).